The following is a 356-amino-acid chain: Alanine racemase, catabolic (356 aa).

The active-site Proton acceptor; specific for D-alanine is the Lys-35. The residue at position 35 (Lys-35) is an N6-(pyridoxal phosphate)lysine. Arg-130 provides a ligand contact to substrate. Catalysis depends on Tyr-253, which acts as the Proton acceptor; specific for L-alanine. Met-301 is a binding site for substrate.

Belongs to the alanine racemase family. Pyridoxal 5'-phosphate is required as a cofactor.

It carries out the reaction L-alanine = D-alanine. Functionally, isomerizes L-alanine to D-alanine which is then oxidized to pyruvate by DadA. This chain is Alanine racemase, catabolic (dadX), found in Escherichia coli (strain K12).